The primary structure comprises 461 residues: Chromosomal replication initiator protein DnaA (461 aa).

Residues 1–83 (MDHSPWQRCL…LRFDVGSKPT (83 aa)) are domain I, interacts with DnaA modulators. Residues 83 to 124 (TIDNSVTNSPVSRNTGGNESLFAKATSAPKVAEPESNIPKKT) form a domain II region. The domain III, AAA+ region stretch occupies residues 125–341 (NVRLNYTFEN…GALNRVIANA (217 aa)). Residues G169, G171, K172, and T173 each contribute to the ATP site. A domain IV, binds dsDNA region spans residues 342-461 (NFTGRAITID…YSNLIRTLSS (120 aa)).

This sequence belongs to the DnaA family. Oligomerizes as a right-handed, spiral filament on DNA at oriC.

The protein localises to the cytoplasm. Functionally, plays an essential role in the initiation and regulation of chromosomal replication. ATP-DnaA binds to the origin of replication (oriC) to initiate formation of the DNA replication initiation complex once per cell cycle. Binds the DnaA box (a 9 base pair repeat at the origin) and separates the double-stranded (ds)DNA. Forms a right-handed helical filament on oriC DNA; dsDNA binds to the exterior of the filament while single-stranded (ss)DNA is stabiized in the filament's interior. The ATP-DnaA-oriC complex binds and stabilizes one strand of the AT-rich DNA unwinding element (DUE), permitting loading of DNA polymerase. After initiation quickly degrades to an ADP-DnaA complex that is not apt for DNA replication. Binds acidic phospholipids. This is Chromosomal replication initiator protein DnaA from Colwellia psychrerythraea (strain 34H / ATCC BAA-681) (Vibrio psychroerythus).